Here is a 122-residue protein sequence, read N- to C-terminus: Large ribosomal subunit protein uL14c (122 aa).

Belongs to the universal ribosomal protein uL14 family. As to quaternary structure, part of the 50S ribosomal subunit.

It localises to the plastid. The protein resides in the chloroplast. In terms of biological role, binds to 23S rRNA. The protein is Large ribosomal subunit protein uL14c of Dioscorea elephantipes (Elephant's foot yam).